Consider the following 155-residue polypeptide: Ribosome maturation factor RimP (155 aa).

Belongs to the RimP family.

It localises to the cytoplasm. Required for maturation of 30S ribosomal subunits. This Macrococcus caseolyticus (strain JCSC5402) (Macrococcoides caseolyticum) protein is Ribosome maturation factor RimP.